We begin with the raw amino-acid sequence, 98 residues long: Integration host factor subunit alpha (98 aa).

Residues 49–71 (FGNFDLRDKNQRPGRNPKTGEDI) form a disordered region.

Belongs to the bacterial histone-like protein family. In terms of assembly, heterodimer of an alpha and a beta chain.

Its function is as follows. This protein is one of the two subunits of integration host factor, a specific DNA-binding protein that functions in genetic recombination as well as in transcriptional and translational control. The chain is Integration host factor subunit alpha from Shewanella oneidensis (strain ATCC 700550 / JCM 31522 / CIP 106686 / LMG 19005 / NCIMB 14063 / MR-1).